The chain runs to 349 residues: MPQQWLPPIYWDGDAVAILDQRLLPQREAVIRCTSPKQVVAAIKNMAIRGAPAVGVAGAMALALGAVLIQAADARTFKSKFARLCRQVRTARPTGRNLGWAVDRIHALVEGNRDADVPRLHELIRREADLILAEDVAGNVAIGSWGKTVIPRGAGIMTYCNAGALATADYGTAVGVIRAAFDADPGIRVFSCETRPFLQGARLTVYELMKAGIPVTLITDNSIGSLMSRGMIDVVVVGADRIAANGDTANKIGTYMAAVLACTHGIPFYVAAPRSTIDASLPDGDGIPIEQRAPKEVTHFNGRRVAPQGAAALNAAFDVTPNKYITGIITEVGILSKPFGRAIRQALKA.

Residues 49–51 (RGA), arginine 92, and glutamine 199 contribute to the substrate site. Aspartate 240 (proton donor) is an active-site residue. 250–251 (NK) is a binding site for substrate.

Belongs to the eIF-2B alpha/beta/delta subunits family. MtnA subfamily.

The enzyme catalyses 5-(methylsulfanyl)-alpha-D-ribose 1-phosphate = 5-(methylsulfanyl)-D-ribulose 1-phosphate. Its pathway is amino-acid biosynthesis; L-methionine biosynthesis via salvage pathway; L-methionine from S-methyl-5-thio-alpha-D-ribose 1-phosphate: step 1/6. In terms of biological role, catalyzes the interconversion of methylthioribose-1-phosphate (MTR-1-P) into methylthioribulose-1-phosphate (MTRu-1-P). This chain is Methylthioribose-1-phosphate isomerase, found in Syntrophobacter fumaroxidans (strain DSM 10017 / MPOB).